Consider the following 458-residue polypeptide: tRNA modification GTPase MnmE (458 aa).

(6S)-5-formyl-5,6,7,8-tetrahydrofolate contacts are provided by Arg-22, Glu-84, and Arg-123. The region spanning 220 to 379 is the TrmE-type G domain; the sequence is GIATAIIGRP…LEKAIADLFF (160 aa). Residue Asn-230 participates in K(+) binding. GTP-binding positions include 230–235, 249–255, and 274–277; these read NVGKSS, TDIAGTT, and DTAG. Residue Ser-234 coordinates Mg(2+). K(+)-binding residues include Thr-249, Ile-251, and Thr-254. Thr-255 contacts Mg(2+). Lys-458 is a binding site for (6S)-5-formyl-5,6,7,8-tetrahydrofolate.

The protein belongs to the TRAFAC class TrmE-Era-EngA-EngB-Septin-like GTPase superfamily. TrmE GTPase family. In terms of assembly, homodimer. Heterotetramer of two MnmE and two MnmG subunits. It depends on K(+) as a cofactor.

Its subcellular location is the cytoplasm. Functionally, exhibits a very high intrinsic GTPase hydrolysis rate. Involved in the addition of a carboxymethylaminomethyl (cmnm) group at the wobble position (U34) of certain tRNAs, forming tRNA-cmnm(5)s(2)U34. This Bacillus cytotoxicus (strain DSM 22905 / CIP 110041 / 391-98 / NVH 391-98) protein is tRNA modification GTPase MnmE.